The chain runs to 686 residues: UvrABC system protein C (686 aa).

Basic and acidic residues predominate over residues 1–14 (MVHDSTDDPDDTRV). Residues 1–48 (MVHDSTDDPDDTRVRKSRRGTALDAPPQETAPPDLDPATTGGDDEDDA) are disordered. The GIY-YIG domain maps to 81–160 (TSPGVYRMLN…IKQLRPRFNV (80 aa)). One can recognise a UVR domain in the interval 270-305 (HAVKQELAGEMEKAANELEFETAALYRDRLAALSAI).

This sequence belongs to the UvrC family. In terms of assembly, interacts with UvrB in an incision complex.

The protein localises to the cytoplasm. In terms of biological role, the UvrABC repair system catalyzes the recognition and processing of DNA lesions. UvrC both incises the 5' and 3' sides of the lesion. The N-terminal half is responsible for the 3' incision and the C-terminal half is responsible for the 5' incision. This chain is UvrABC system protein C, found in Bradyrhizobium diazoefficiens (strain JCM 10833 / BCRC 13528 / IAM 13628 / NBRC 14792 / USDA 110).